The following is a 210-amino-acid chain: ATP-dependent Clp protease proteolytic subunit (210 aa).

Ser114 acts as the Nucleophile in catalysis. His139 is an active-site residue.

The protein belongs to the peptidase S14 family. As to quaternary structure, fourteen ClpP subunits assemble into 2 heptameric rings which stack back to back to give a disk-like structure with a central cavity, resembling the structure of eukaryotic proteasomes.

Its subcellular location is the cytoplasm. The catalysed reaction is Hydrolysis of proteins to small peptides in the presence of ATP and magnesium. alpha-casein is the usual test substrate. In the absence of ATP, only oligopeptides shorter than five residues are hydrolyzed (such as succinyl-Leu-Tyr-|-NHMec, and Leu-Tyr-Leu-|-Tyr-Trp, in which cleavage of the -Tyr-|-Leu- and -Tyr-|-Trp bonds also occurs).. Functionally, cleaves peptides in various proteins in a process that requires ATP hydrolysis. Has a chymotrypsin-like activity. Plays a major role in the degradation of misfolded proteins. The protein is ATP-dependent Clp protease proteolytic subunit of Janthinobacterium sp. (strain Marseille) (Minibacterium massiliensis).